The sequence spans 257 residues: uncharacterized protein (257 aa).

2 disordered regions span residues 1–178 (MAMF…SYDS) and 194–248 (AITK…LAGN). Over residues 12–21 (SKLKKGRRKL) the composition is skewed to basic residues. The span at 50 to 71 (NTNSGSSSDGEDGLLTSSGSDS) shows a compositional bias: low complexity. Over residues 72-94 (VFNSTDYFSTPEDSQNCTPSDVS) the composition is skewed to polar residues. The span at 102-114 (LDFKPADVLHDSE) shows a compositional bias: basic and acidic residues. A compositionally biased stretch (polar residues) spans 115–126 (NSTSPKFITSLV). Low complexity predominate over residues 127–136 (SSDSENSGAD). Residues 163-178 (ITSEEDCCVQEDSYDS) show a composition bias toward acidic residues.

Belongs to the herpesviridae BKRF4 family.

This is an uncharacterized protein from Saimiriine herpesvirus 2 (strain 11) (SaHV-2).